A 431-amino-acid chain; its full sequence is Putative transcription factor R429 (431 aa).

Positions 28 to 95 (NKFENMSKAL…SIENCSESLD (68 aa)) form a coiled coil. The disordered stretch occupies residues 142 to 187 (SQQENSSESNNDIVKNGTGGSTSKRKKIQPSNRCSGSKTGKVTETK). Over residues 143 to 152 (QQENSSESNN) the composition is skewed to low complexity. A compositionally biased stretch (polar residues) spans 170–181 (QPSNRCSGSKTG). The segment at 218–241 (CSVPDCDGEKILNQNDGYMVCKKC) is a zinc-finger region.

The protein belongs to the nucleo-cytoplasmic large DNA viruses (NCLDVs) VLTF-3 family.

Its function is as follows. Putative transcription factor. This is Putative transcription factor R429 from Acanthamoeba polyphaga (Amoeba).